Reading from the N-terminus, the 557-residue chain is Leucine-rich glioma-inactivated protein 1 (557 aa).

The signal sequence occupies residues 1 to 34 (MESESIRRMGNACIPLKRIAYFLCLFSVVLLTEG). One can recognise an LRRNT domain in the interval 35-72 (KKPAKPKCPAVCTCSKDNALCENARSIPRTVPPDVISL). LRR repeat units follow at residues 92-113 (SLQLLLFTSNSFDVISDDAFIG), 116-137 (HLEYLFIENNNIKSISRHTFRG), and 140-161 (SLIHLSLANNNLQTLPKDIFKG). An LRRCT domain is found at 173–223 (NSFNCDCKLKWLVEWLGHTNATVEDIYCEGPPEYKKRKINSLSPKDFDCII). Asn192 is a glycosylation site (N-linked (GlcNAc...) asparagine). 7 EAR repeats span residues 225-267 (EFAK…EWDH), 271-313 (TFRN…KRDG), 317-364 (KFIK…KWNG), 366-415 (GFYS…QWSK), 419-462 (LFIN…KWGG), 464-506 (SFQD…NWDA), and 510-552 (KFVK…KHVI). The N-linked (GlcNAc...) asparagine glycan is linked to Asn277. A glycan (N-linked (GlcNAc...) asparagine) is linked at Asn422.

Oligomer. Interacts with KCNA1 within a complex containing KCNA1, KCNA4 and KCNAB1. Can bind to ADAM11 and ADAM23. Part of a complex containing ADAM22, DLG4/PSD95 and CACNG2 (stargazin). Glycosylated. In terms of tissue distribution, expressed in brain. High levels found in hippocampus, thalamic nuclei, neocortex, and molecular and granule cell layers of the cerebellum.

It is found in the secreted. Its subcellular location is the synapse. The protein resides in the cytoplasm. In terms of biological role, plays a role in suppressing the production of MMP1/3 through the phosphatidylinositol 3-kinase/ERK pathway. Regulates voltage-gated potassium channels assembled from KCNA1, KCNA4 and KCNAB1. It slows down channel inactivation by precluding channel closure mediated by the KCNAB1 subunit. Ligand for ADAM22 that positively regulates synaptic transmission mediated by AMPA-type glutamate receptors. This chain is Leucine-rich glioma-inactivated protein 1 (Lgi1), found in Rattus norvegicus (Rat).